Here is a 2254-residue protein sequence, read N- to C-terminus: Voltage-dependent T-type calcium channel subunit alpha-1G (2254 aa).

Positions 1 to 48 are disordered; it reads MDEEEDGAGAEESGQPRSFTQLNDLSGAGGRQGPGSTEKDPGSADSEA. At 1 to 80 the chain is on the cytoplasmic side; it reads MDEEEDGAGA…RSWCLRTVCN (80 aa). Polar residues predominate over residues 15–24; that stretch reads QPRSFTQLND. The stretch at 68-398 is one I repeat; sequence SRPRSWCLRT…LCLVVIATQF (331 aa). The helical transmembrane segment at 81-101 threads the bilayer; the sequence is PWFERVSMLVILLNCVTLGMF. The Extracellular portion of the chain corresponds to 102 to 119; that stretch reads RPCEDIACDSQRCRILQA. Residues 120-141 form a helical membrane-spanning segment; the sequence is FDDFIFAFFAVEMVVKMVALGI. Residues 142 to 150 lie on the Cytoplasmic side of the membrane; it reads FGKKCYLGD. Residues 151–170 traverse the membrane as a helical segment; it reads TWNRLDFFIVIAGMLEYSLD. Over 171 to 175 the chain is Extracellular; that stretch reads LQNVS. Residue asparagine 173 is glycosylated (N-linked (GlcNAc...) asparagine). The helical transmembrane segment at 176–193 threads the bilayer; that stretch reads FSAVRTVRVLRPLRAINR. At 194–213 the chain is on the cytoplasmic side; that stretch reads VPSMRILVTLLLDTLPMLGN. Residues 214-234 form a helical membrane-spanning segment; the sequence is VLLLCFFVFFIFGIVGVQLWA. Residues 235–370 lie on the Extracellular side of the membrane; it reads GLLRNRCFLP…YFVMDAHSFY (136 aa). Asparagine 246, asparagine 306, asparagine 310, and asparagine 322 each carry an N-linked (GlcNAc...) asparagine glycan. A helical membrane pass occupies residues 371–395; the sequence is NFIYFILLIIVGSFFMINLCLVVIA. At 396 to 744 the chain is on the cytoplasmic side; it reads TQFSETKQRE…DTFRKIVDSK (349 aa). At serine 467 the chain carries Phosphoserine. A compositionally biased stretch (basic residues) spans 494 to 506; sequence LVHHHHHHHHHYH. 4 disordered regions span residues 494–513, 525–553, 579–598, and 699–721; these read LVHH…GTLR, DANG…AESV, ASGR…TSPP, and DAQH…GPDA. Over residues 534–545 the composition is skewed to pro residues; that stretch reads LPPPSTPTPSGG. Serine 716 is modified (phosphoserine). The stretch at 730–968 is one II repeat; sequence WRLICDTFRK…LLVAILVEGF (239 aa). The helical transmembrane segment at 745–765 threads the bilayer; that stretch reads YFGRGIMIAILVNTLSMGIEY. Residues 766 to 778 lie on the Extracellular side of the membrane; sequence HEQPEELTNALEI. The chain crosses the membrane as a helical span at residues 779-800; the sequence is SNIVFTSLFALEMLLKLLVYGP. The Cytoplasmic segment spans residues 801 to 806; it reads FGYIKN. The helical transmembrane segment at 807 to 825 threads the bilayer; it reads PYNIFDGVIVVISVWEIVG. The Extracellular portion of the chain corresponds to 826–833; it reads QQGGGLSV. A helical membrane pass occupies residues 834–857; that stretch reads LRTFRLMRVLKLVRFLPALQRQLV. Over 858-868 the chain is Cytoplasmic; sequence VLMKTMDNVAT. A helical membrane pass occupies residues 869 to 889; sequence FCMLLMLFIFIFSILGMHLFG. The Extracellular segment spans residues 890–940; that stretch reads CKFASERDGDTLPDRKNFDSLLWAIVTVFQILTQEDWNKVLYNGMASTSSW. Residues 941-965 traverse the membrane as a helical segment; sequence AALYFIALMTFGNYVLFNLLVAILV. Residues 966–1251 lie on the Cytoplasmic side of the membrane; that stretch reads EGFQAEGDAT…SRFRLLCHRI (286 aa). Residues 1024-1209 are disordered; the sequence is TPMSHPKSSS…GDDDNDEGNL (186 aa). Composition is skewed to low complexity over residues 1041–1052 and 1065–1091; these read GSGSRRTSSSGS and PPSA…SRNS. 2 stretches are compositionally biased toward acidic residues: residues 1117–1126 and 1196–1206; these read ESQDEEESSE and PQLDGDDDNDE. Serine 1118, serine 1124, and serine 1125 each carry phosphoserine. Residues 1242–1519 form an III repeat; the sequence is SRFRLLCHRI…MFVGVVVENF (278 aa). A helical membrane pass occupies residues 1252 to 1274; the sequence is ITHKMFDHVVLVIIFLNCITIAM. At 1275-1292 the chain is on the extracellular side; it reads ERPKIDPHSAERIFLTLS. A helical transmembrane segment spans residues 1293-1313; that stretch reads NYIFTAVFLAEMTVKVVALGW. Over 1314-1323 the chain is Cytoplasmic; the sequence is CFGEQAYLRS. A helical membrane pass occupies residues 1324-1343; the sequence is SWNVLDGLLVLISVIDILVS. Topologically, residues 1344–1357 are extracellular; sequence MVSDSGTKILGMLR. A helical transmembrane segment spans residues 1358–1379; it reads VLRLLRTLRPLRVISRAQGLKL. At 1380-1389 the chain is on the cytoplasmic side; the sequence is VVETLMSSLK. Residues 1390-1413 traverse the membrane as a helical segment; that stretch reads PIGNIVVICCAFFIIFGILGVQLF. Over 1414–1490 the chain is Extracellular; the sequence is KGKFFVCQGE…DQQPIMNHNP (77 aa). N-linked (GlcNAc...) asparagine glycosylation is found at asparagine 1427 and asparagine 1430. Residues 1491 to 1516 traverse the membrane as a helical segment; sequence WMLLYFISFLLIVAFFVLNMFVGVVV. The Cytoplasmic segment spans residues 1517-1578; sequence ENFHKCRQHQ…RLLVHHLCTS (62 aa). The IV repeat unit spans residues 1564 to 1822; sequence DYSRFRLLVH…VVIAVLMKHL (259 aa). The helical transmembrane segment at 1579–1599 threads the bilayer; it reads HYLDLFITGVIGLNVVTMAME. Topologically, residues 1600–1613 are extracellular; that stretch reads HYQQPQILDEALKI. A helical transmembrane segment spans residues 1614 to 1635; it reads CNYIFTVIFVFESVFKLVAFGF. Topologically, residues 1636–1642 are cytoplasmic; it reads RRFFQDR. The chain crosses the membrane as a helical span at residues 1643-1661; sequence WNQLDLAIVLLSIMGITLE. Residues 1662 to 1675 are Extracellular-facing; it reads EIEVNLSLPINPTI. The N-linked (GlcNAc...) asparagine glycan is linked to asparagine 1666. The helical transmembrane segment at 1676–1699 threads the bilayer; it reads IRIMRVLRIARVLKLLKMAVGMRA. Over 1700 to 1713 the chain is Cytoplasmic; sequence LLHTVMQALPQVGN. A helical transmembrane segment spans residues 1714–1734; that stretch reads LGLLFMLLFFIFAALGVELFG. Topologically, residues 1735-1794 are extracellular; sequence DLECDETHPCEGLGRHATFRNFGMAFLTLFRVSTGDNWNGIMKDTLRDCDQESTCYNTVI. Residues 1795 to 1822 traverse the membrane as a helical segment; it reads SPIYFVSFVLTAQFVLVNVVIAVLMKHL. The Cytoplasmic portion of the chain corresponds to 1823-2254; the sequence is EESNKEAKEE…LSSDPTDMDP (432 aa). The disordered stretch occupies residues 2153–2254; that stretch reads DSGSQPRLCP…LSSDPTDMDP (102 aa). The span at 2184-2193 shows a compositional bias: low complexity; the sequence is SPPSISIDPP. 2 stretches are compositionally biased toward polar residues: residues 2220 to 2232 and 2240 to 2254; these read PSVS…TAAS and LSLS…DMDP.

This sequence belongs to the calcium channel alpha-1 subunit (TC 1.A.1.11) family. CACNA1G subfamily. In response to raising of intracellular calcium, the T-type channels are activated by CaM-kinase II. Highly expressed in brain. Moderate expression in heart; low expression in placenta, kidney and lung.

Its subcellular location is the cell membrane. It localises to the cytoplasm. The catalysed reaction is Ca(2+)(in) = Ca(2+)(out). Functionally, voltage-sensitive calcium channels (VSCC) mediate the entry of calcium ions into excitable cells and are also involved in a variety of calcium-dependent processes, including muscle contraction, hormone or neurotransmitter release, gene expression, cell motility, cell division and cell death. The isoform alpha-1G gives rise to T-type calcium currents. T-type calcium channels belong to the 'low-voltage activated (LVA)' group and are strongly blocked by nickel and mibefradil. A particularity of this type of channels is an opening at quite negative potentials and a voltage-dependent inactivation. T-type channels serve pacemaking functions in both central neurons and cardiac nodal cells and support calcium signaling in secretory cells and vascular smooth muscle. They may also be involved in the modulation of firing patterns of neurons which is important for information processing as well as in cell growth processes. The polypeptide is Voltage-dependent T-type calcium channel subunit alpha-1G (Cacna1g) (Rattus norvegicus (Rat)).